A 252-amino-acid chain; its full sequence is Ribosomal RNA small subunit methyltransferase NEP1 (252 aa).

S-adenosyl-L-methionine is bound by residues leucine 180, glycine 207, 212–214 (GKD), and 227–232 (LSNYPL).

It belongs to the class IV-like SAM-binding methyltransferase superfamily. RNA methyltransferase NEP1 family. As to quaternary structure, homodimer. Interacts with snoRNA U3. Interacts with NOP14 and MPP10. Component of the ribosomal small subunit (SSU) processome composed of at least 40 protein subunits and snoRNA U3.

Its subcellular location is the nucleus. It localises to the nucleolus. The enzyme catalyses pseudouridine(1191) in yeast 18S rRNA + S-adenosyl-L-methionine = N(1)-methylpseudouridine(1191) in yeast 18S rRNA + S-adenosyl-L-homocysteine + H(+). S-adenosyl-L-methionine-dependent pseudouridine N(1)-methyltransferase that methylates pseudouridine at position 1189 (Psi1189) in 18S rRNA. Involved the biosynthesis of the hypermodified N1-methyl-N3-(3-amino-3-carboxypropyl) pseudouridine (m1acp3-Psi) conserved in eukaryotic 18S rRNA. N1-methylation is independent on acp-modification at the N3-position of U1191. Also has an essential role in 40S ribosomal subunit biogenesis independent on its methyltransferase activity, facilitating the incorporation of ribosomal protein S19 (RPS19A/RPS19B) during the formation of pre-ribosomes. The sequence is that of Ribosomal RNA small subunit methyltransferase NEP1 from Saccharomyces cerevisiae (strain ATCC 204508 / S288c) (Baker's yeast).